The chain runs to 653 residues: Choline transporter-like protein 1 (653 aa).

Gly-2 is lipidated: N-myristoyl glycine. The Cytoplasmic segment spans residues 2–29 (GCCSSASAAQSSKREWKPLEDRSCTDIP). Residues 30–50 (WLLLFVLFCIGMGFICGFSVA) traverse the membrane as a helical segment. The Mitochondrial intermembrane portion of the chain corresponds to 51–211 (TGAAARLVSG…RLISGVMTSK (161 aa)). The chain crosses the membrane as a helical span at residues 212–232 (EIILGLCLLSLVLSMILMVII). Residues 233–237 (RYISR) lie on the Cytoplasmic side of the membrane. Residues 238-258 (VLVWILTVLVILGSLGGTGVL) traverse the membrane as a helical segment. Residues 259 to 287 (WWLYAKQRRSPKEAVIPEQLQIAEDNLRA) lie on the Mitochondrial intermembrane side of the membrane. Residues 288–308 (LLIYAISATVFTVILFLIMLV) form a helical membrane-spanning segment. Residues 309–314 (MRKRVA) lie on the Cytoplasmic side of the membrane. Residues 315 to 335 (LTIALFHVAGKVFIHLPLLVF) traverse the membrane as a helical segment. The Mitochondrial intermembrane segment spans residues 336–337 (QP). Residues 338-358 (FWTFFALVLFWAYWIMTLLFL) form a helical membrane-spanning segment. Residues 359–379 (GTTGSAVQNEQGFVEYKISGP) lie on the Cytoplasmic side of the membrane. The chain crosses the membrane as a helical span at residues 380 to 400 (LQYMWWYHVVGLIWISEFILA). The Mitochondrial intermembrane segment spans residues 401 to 536 (CQQMTVAGAV…RVAAINTVGD (136 aa)). A helical transmembrane segment spans residues 537–557 (FMLFLGKVLIVCSTGLAGIML). At 558 to 565 (LNYQQDYT) the chain is on the cytoplasmic side. Residues 566–586 (VWVLPLIIVCLFAFLVAHCFL) form a helical membrane-spanning segment. The Mitochondrial intermembrane portion of the chain corresponds to 587–653 (SIYEMVVDVL…RELKPMLRKR (67 aa)).

It belongs to the CTL (choline transporter-like) family. As to expression, specifically abundant in skeletal muscle (at protein level).

It is found in the cell membrane. Its subcellular location is the mitochondrion outer membrane. The catalysed reaction is choline(out) + n H(+)(in) = choline(in) + n H(+)(out). The enzyme catalyses ethanolamine(out) + n H(+)(in) = ethanolamine(in) + n H(+)(out). Choline/H+ antiporter. Also acts as a high-affinity ethanolamine/H+ antiporter, regulating the supply of extracellular ethanolamine (Etn) for the CDP-Etn pathway, redistribute intracellular Etn and balance the CDP-Cho and CDP-Etn arms of the Kennedy pathway. Involved in membrane synthesis and myelin production. The chain is Choline transporter-like protein 1 (Slc44a1) from Mus musculus (Mouse).